The primary structure comprises 311 residues: Malate dehydrogenase (311 aa).

Residues 7–13 (GAAGGIG) and Asp34 each bind NAD(+). Substrate contacts are provided by Arg81 and Arg87. NAD(+) contacts are provided by residues Asn94 and 117 to 119 (ITN). Positions 119 and 153 each coordinate substrate. Catalysis depends on His177, which acts as the Proton acceptor. Met227 provides a ligand contact to NAD(+).

This sequence belongs to the LDH/MDH superfamily. MDH type 1 family. Homodimer.

The enzyme catalyses (S)-malate + NAD(+) = oxaloacetate + NADH + H(+). Catalyzes the reversible oxidation of malate to oxaloacetate. The sequence is that of Malate dehydrogenase from Shewanella putrefaciens (strain CN-32 / ATCC BAA-453).